The sequence spans 266 residues: Metallo-beta-lactamase VIM-1 (266 aa).

The N-terminal stretch at 1 to 20 (MLKVISSLLVYMTASVMAVA) is a signal peptide. Zn(2+)-binding residues include His114, His116, Asp118, His179, Cys198, and His240.

This sequence belongs to the metallo-beta-lactamase superfamily. Class-B beta-lactamase family. As to quaternary structure, monomer. Zn(2+) is required as a cofactor.

The protein resides in the periplasm. The catalysed reaction is a beta-lactam + H2O = a substituted beta-amino acid. With respect to regulation, weakly inhibited by beta-lactamase-blocking agent sulbactam. Functionally, class B beta-lactamase which confers resistance to the beta-lactam antibiotics, including penicillins, cephalosporins and carbapenems. Acts via hydrolysis of the beta-lactam ring. Has penicillin-, cephalosporin- and carbapenem-hydrolyzing activities. The sequence is that of Metallo-beta-lactamase VIM-1 from Pseudomonas aeruginosa (strain ATCC 15692 / DSM 22644 / CIP 104116 / JCM 14847 / LMG 12228 / 1C / PRS 101 / PAO1).